Reading from the N-terminus, the 288-residue chain is Homoserine kinase (288 aa).

79–89 contributes to the ATP binding site; that stretch reads PLARGLGSSSS.

This sequence belongs to the GHMP kinase family. Homoserine kinase subfamily.

Its subcellular location is the cytoplasm. The enzyme catalyses L-homoserine + ATP = O-phospho-L-homoserine + ADP + H(+). It functions in the pathway amino-acid biosynthesis; L-threonine biosynthesis; L-threonine from L-aspartate: step 4/5. Catalyzes the ATP-dependent phosphorylation of L-homoserine to L-homoserine phosphate. The polypeptide is Homoserine kinase (Streptococcus gordonii (strain Challis / ATCC 35105 / BCRC 15272 / CH1 / DL1 / V288)).